Here is a 736-residue protein sequence, read N- to C-terminus: MKHLIIVESPAKAKTIKNFLDKNYEVVASKGHVRDLSKFALGIKIDETGFTPNYVVDKDHKELVKQIIELSKKASITYIATDEDREGEAIGYHVACLIGGKLESYPRIVFHEITQNAILNVLKTPRKIDMFKVNAQQARRLLDRIVGFKLSSLIASKITKGLSAGRVQSAALKLVIDREKEIRPFKPLTYFTLDALFEPHLEAQLISYKGNKLKAQELIDEKKAQEIKNELEKESYIISSIIKKSKKSPTPPPFMTSTLQQSASSLLGFSPTKTMSIAQKLYEGVATPQGVMGVITYMRTDSLNIAKEALEEARAKILKDYGKDYLPPKAKVYSSKNKNAQEAHEAIRPTSIILEPNALKDYLKPEELKLYTLIYKRFLASQMQDALFESQSVVVACEKGEFKASGRKLLFDGHYKILGNDDKDKLLPNLKENDPIKLEKLESNAHVTEPPARYSEASLIKVLESLGIGRPSTYAPTISLLQNRDYIKVEKKQISALESAFKVIEILEKHFEEIVDSKFSASLEEELDNIAQNKADYQQVLKDFYYPFMDKIEAGKKNIISQKVHEKTGQSCPKCGGELVKKNSRYGEFIACNNYPKCKYIKQTENANDEAKQELCEKCGGEMVQKFSRNGAFLACNNYPECKNTKSLKNTPNAKETIEGVKCPECGGDIALKRSKKGSFYGCNNYPKCNFLSNHKPINKRCEKCHYLMSERIYRKKKAHECIQCKERVFLEEDNG.

Positions Lys2–Ile113 constitute a Toprim domain. Mg(2+) is bound by residues Glu8 and Asp82. The 424-residue stretch at Asp129 to Ile552 folds into the Topo IA-type catalytic domain. The tract at residues Ser163–Gln168 is interaction with DNA. The active-site O-(5'-phospho-DNA)-tyrosine intermediate is Tyr297. 4 consecutive C4-type zinc fingers follow at residues Cys572–Cys598, Cys616–Cys642, Cys663–Cys689, and Cys702–Cys725.

It belongs to the type IA topoisomerase family. Monomer. Mg(2+) is required as a cofactor.

It carries out the reaction ATP-independent breakage of single-stranded DNA, followed by passage and rejoining.. Its function is as follows. Releases the supercoiling and torsional tension of DNA, which is introduced during the DNA replication and transcription, by transiently cleaving and rejoining one strand of the DNA duplex. Introduces a single-strand break via transesterification at a target site in duplex DNA. The scissile phosphodiester is attacked by the catalytic tyrosine of the enzyme, resulting in the formation of a DNA-(5'-phosphotyrosyl)-enzyme intermediate and the expulsion of a 3'-OH DNA strand. The free DNA strand then undergoes passage around the unbroken strand, thus removing DNA supercoils. Finally, in the religation step, the DNA 3'-OH attacks the covalent intermediate to expel the active-site tyrosine and restore the DNA phosphodiester backbone. In Helicobacter pylori (strain J99 / ATCC 700824) (Campylobacter pylori J99), this protein is DNA topoisomerase 1.